A 960-amino-acid polypeptide reads, in one-letter code: FYVE, RhoGEF and PH domain-containing protein 1 (960 aa).

Disordered regions lie at residues 1 to 210 (MHGH…SSAA) and 226 to 355 (ASDR…REIP). Residue Ser48 is modified to Phosphoserine. A compositionally biased stretch (basic and acidic residues) spans 125-135 (PHPEGPQRLRS). Pro residues-rich tracts occupy residues 137–149 (PGPP…PRPS), 156–165 (GPKPQVPPKP), and 173–190 (VLPP…PLPA). The SH3-binding motif lies at 171 to 187 (PRVLPPPEPIPPPPSRP). Position 205 is a phosphoserine (Ser205). Over residues 231–251 (APGPCPVPPEPAMLPQPPPQP) the composition is skewed to pro residues. The span at 273–284 (RDGEKVPNRDSG) shows a compositional bias: basic and acidic residues. Residues 285–294 (IDSISSPSNS) are compositionally biased toward low complexity. Residues 335 to 350 (VDSDLEEEEEEEEEEK) are compositionally biased toward acidic residues. In terms of domain architecture, DH spans 372–560 (KVFHIANELL…ATAAEHSNAA (189 aa)). Residues 589-688 (ELIKEGHILK…WVQAINSTLL (100 aa)) form the PH 1 domain. Residues 701-725 (NSTNRDDEDTPPNSPNVDLGKRAPT) form a disordered region. Position 710 is a phosphothreonine (Thr710). Ser714 is modified (phosphoserine). Residues 729–789 (EKEVTMCMRC…VCTDCYVALH (61 aa)) form an FYVE-type zinc finger. Residues Cys735, Cys738, Cys752, Cys755, Cys760, Cys763, Cys781, and Cys784 each coordinate Zn(2+). Residues 820 to 920 (NSVICSFLHY…WMAVLGRAGR (101 aa)) form the PH 2 domain. The interval 922–960 (DTFCPGPTLSEDKEMEETPVAASGATAEPPEASQTRDKT) is disordered.

Interacts with DBNL/ABP1 and CTTN. Binds CDC42. May interact with CCPG1.

The protein resides in the cytoplasm. Its subcellular location is the cell projection. It is found in the lamellipodium. The protein localises to the ruffle. It localises to the cytoskeleton. Activates CDC42, a member of the Ras-like family of Rho- and Rac proteins, by exchanging bound GDP for free GTP. Plays a role in regulating the actin cytoskeleton and cell shape. In Mus musculus (Mouse), this protein is FYVE, RhoGEF and PH domain-containing protein 1 (Fgd1).